Reading from the N-terminus, the 348-residue chain is Major outer membrane protein P.IB (348 aa).

The first 19 residues, 1–19 (MKKSLIALTLAALPVAATA), serve as a signal peptide directing secretion.

It belongs to the Gram-negative porin family. As to quaternary structure, homotrimer.

It localises to the cell outer membrane. Serves as a slightly cation selective porin. Major antigen on the gonococcal cell surface and it may have pathogenic properties in addition to its porin activity. The sequence is that of Major outer membrane protein P.IB (porB) from Neisseria gonorrhoeae.